The sequence spans 224 residues: Flagellar L-ring protein (224 aa).

An N-terminal signal peptide occupies residues 1-15; that stretch reads MIKYIALASVVLLVG. A lipid anchor (N-palmitoyl cysteine) is attached at C16. C16 carries S-diacylglycerol cysteine lipidation.

The protein belongs to the FlgH family. The basal body constitutes a major portion of the flagellar organelle and consists of four rings (L,P,S, and M) mounted on a central rod.

The protein resides in the cell outer membrane. The protein localises to the bacterial flagellum basal body. Functionally, assembles around the rod to form the L-ring and probably protects the motor/basal body from shearing forces during rotation. This is Flagellar L-ring protein from Shewanella frigidimarina (strain NCIMB 400).